Consider the following 430-residue polypeptide: Serine hydroxymethyltransferase (430 aa).

Gly-120–Ile-122 contributes to the (6S)-5,6,7,8-tetrahydrofolate binding site. Position 226 is an N6-(pyridoxal phosphate)lysine (Lys-226).

Belongs to the SHMT family. In terms of assembly, homodimer. Requires pyridoxal 5'-phosphate as cofactor.

The protein localises to the cytoplasm. It participates in amino-acid biosynthesis; glycine biosynthesis; glycine from L-serine: step 1/1. Its function is as follows. Catalyzes the reversible interconversion of serine and glycine with a modified folate serving as the one-carbon carrier. Also exhibits a pteridine-independent aldolase activity toward beta-hydroxyamino acids, producing glycine and aldehydes, via a retro-aldol mechanism. This chain is Serine hydroxymethyltransferase, found in Pyrobaculum neutrophilum (strain DSM 2338 / JCM 9278 / NBRC 100436 / V24Sta) (Thermoproteus neutrophilus).